An 819-amino-acid chain; its full sequence is Sulfate permease 2 (819 aa).

N-linked (GlcNAc...) asparagine glycosylation occurs at N24. 10 helical membrane passes run 72–92 (YNLT…FVVV), 104–124 (LAPE…WAFA), 129–149 (ITIG…ANVQ), 172–192 (LLFL…IVAI), 194–214 (AFMT…LMGI), 273–293 (FFVS…VSWL), 328–348 (ILSA…IEHI), 365–385 (SQEL…GGYP), 454–474 (FWLT…VSIF), and 477–497 (IENG…WRIA). The STAS domain occupies 551–708 (ELQISTPWPG…ENHKGGVQEV (158 aa)). N-linked (GlcNAc...) asparagine glycosylation occurs at N581. The segment at 726 to 766 (EAVPVGTSGSGSTDEKRPEGEGGATNGGMEKGSANGEDIST) is disordered. Gly residues predominate over residues 746 to 755 (EGGATNGGME).

Belongs to the SLC26A/SulP transporter (TC 2.A.53) family. As to expression, mainly found in mycelia.

The protein resides in the membrane. Its function is as follows. Uptake of sulfate into the cell. The polypeptide is Sulfate permease 2 (cys-14) (Neurospora crassa (strain ATCC 24698 / 74-OR23-1A / CBS 708.71 / DSM 1257 / FGSC 987)).